The following is a 353-amino-acid chain: MESAIGEHLQCPRTLTRRVPDTYTPPFPMWVGRADDALQQVVMGYLGVQFRDEDQRPAALQAMRDIVAGFDLPDGPAHHDLTHHIDNQGYENLIVVGYWKDVSSQHRWSTSTPIASWWESEDRLSDGLGFFREIVAPRAEQFETLYAFQEDLPGVGAVMDGISGEINEHGYWGSMRERFPISQTDWMQASGELRVIAGDPAVGGRVVVRGHDNIALIRSGQDWADAEADERSLYLDEILPTLQSGMDFLRDNGPAVGCYSNRFVRNIDIDGNFLDLSYNIGHWASLDQLERWSESHPTHLRIFTTFFRVAAGLSKLRLYHEVSVFDAADQLYEYINCHPGTGMLRDAVTIAEH.

Ser219 contributes to the an aliphatic aldoxime binding site. His299 contacts heme b. His320 contributes to the an aliphatic aldoxime binding site. The active site involves His320.

This sequence belongs to the heme-containing dehydratase family. In terms of assembly, homodimer. Heme b is required as a cofactor.

The catalysed reaction is an aliphatic aldoxime = a nitrile + H2O. Its activity is regulated as follows. Active when the heme iron is in the ferrous state. The activity is enhanced by reducing agents, such as Na(2)S, Na(2)S(2)(O4), 2-mercaptoethanol, and L-cysteine and supplementary additions of electron acceptors such as flavins, sulfite ion, and vitamin K3. The effect of various chemicals on the enzyme activity is different in the presence and absence of the reducing reagent, Na(2)S, which acts not only as a reductant but also changes the substrate specificity of the enzyme. Its function is as follows. Catalyzes the dehydration of aldoximes to their corresponding nitrile. Is active toward various arylalkyl- and alkyl-aldoximes, and to a lesser extent toward aryl-aldoximes. The protein is Aliphatic aldoxime dehydratase of Rhodococcus erythropolis (Arthrobacter picolinophilus).